Here is a 294-residue protein sequence, read N- to C-terminus: Acetylglutamate kinase (294 aa).

Substrate-binding positions include 64–65 (GG), Arg86, and Asn189.

The protein belongs to the acetylglutamate kinase family. ArgB subfamily.

It localises to the cytoplasm. The enzyme catalyses N-acetyl-L-glutamate + ATP = N-acetyl-L-glutamyl 5-phosphate + ADP. It functions in the pathway amino-acid biosynthesis; L-arginine biosynthesis; N(2)-acetyl-L-ornithine from L-glutamate: step 2/4. Its function is as follows. Catalyzes the ATP-dependent phosphorylation of N-acetyl-L-glutamate. In Carboxydothermus hydrogenoformans (strain ATCC BAA-161 / DSM 6008 / Z-2901), this protein is Acetylglutamate kinase.